Reading from the N-terminus, the 465-residue chain is Uronate isomerase (465 aa).

Belongs to the metallo-dependent hydrolases superfamily. Uronate isomerase family.

The catalysed reaction is D-glucuronate = D-fructuronate. It carries out the reaction aldehydo-D-galacturonate = keto-D-tagaturonate. It participates in carbohydrate metabolism; pentose and glucuronate interconversion. In Streptococcus equi subsp. equi (strain 4047), this protein is Uronate isomerase.